The chain runs to 334 residues: HTH-type transcriptional repressor PurR (334 aa).

Residues 2-56 (ATIKDVARLAGVSTTTVSHVINKTRFVAETTQEKVMKAVDELNYAPSAVARSLKC) enclose the HTH lacI-type domain. The H-T-H motif DNA-binding region spans 4–23 (IKDVARLAGVSTTTVSHVIN). The DNA-binding element occupies 48–56 (SAVARSLKC). Hypoxanthine contacts are provided by Phe-73, Lys-189, Phe-220, and Asp-274.

As to quaternary structure, homodimer.

It participates in purine metabolism; purine nucleotide biosynthesis [regulation]. Its function is as follows. Is the main repressor of the genes involved in the de novo synthesis of purine nucleotides, regulating purB, purC, purEK, purF, purHD, purL, purMN and guaBA expression. PurR is allosterically activated to bind its cognate DNA by binding the purine corepressors, hypoxanthine or guanine, thereby effecting transcription repression. This chain is HTH-type transcriptional repressor PurR, found in Vibrio campbellii (strain ATCC BAA-1116).